The primary structure comprises 505 residues: Methylmalonyl-CoA carboxyltransferase 5S subunit (505 aa).

The 263-residue stretch at 14 to 276 folds into the Pyruvate carboxyltransferase domain; that stretch reads VGITELVLRD…TTNLDYDRLH (263 aa). Residues 22–26, A59, and K184 contribute to the substrate site; that span reads RDAHQ. Co(2+) is bound at residue D23. Positions 184, 215, and 217 each coordinate Co(2+). Position 184 is an N6-carboxylysine; partial (K184).

Homodimer. Transcarboxylase is composed of three subunits: 1.3S, 5S, and 12S. The core of the enzyme is composed of six 12S subunits. On each side of the core there are three pairs of 5S subunits. Each 5S dimer is attached to the core by two 1.3S subunits. Thus the total number of chains is 30 (6 + 12 + 12). The cofactor is Co(2+). Post-translationally, lys-184 is carboxylated in the free enzyme and helps to coordinate the cobalt ion. Lys-184 is partially carboxylated in the complex with pyruvate, but is not carboxylated in the oxaloacetate-bound form.

The catalysed reaction is (S)-methylmalonyl-CoA + pyruvate = propanoyl-CoA + oxaloacetate. The 5S subunit specifically catalyzes the transfer of the carboxyl group from biotin of the 1.3S subunit to pyruvate to form oxaloacetate and 1.3S biotin. The polypeptide is Methylmalonyl-CoA carboxyltransferase 5S subunit (Propionibacterium freudenreichii subsp. shermanii).